The following is a 109-amino-acid chain: Large ribosomal subunit protein uL24 (109 aa).

The protein belongs to the universal ribosomal protein uL24 family. As to quaternary structure, part of the 50S ribosomal subunit.

In terms of biological role, one of two assembly initiator proteins, it binds directly to the 5'-end of the 23S rRNA, where it nucleates assembly of the 50S subunit. Its function is as follows. One of the proteins that surrounds the polypeptide exit tunnel on the outside of the subunit. This Syntrophotalea carbinolica (strain DSM 2380 / NBRC 103641 / GraBd1) (Pelobacter carbinolicus) protein is Large ribosomal subunit protein uL24.